A 129-amino-acid polypeptide reads, in one-letter code: Small ribosomal subunit protein uS11 (129 aa).

It belongs to the universal ribosomal protein uS11 family. In terms of assembly, part of the 30S ribosomal subunit. Interacts with proteins S7 and S18. Binds to IF-3.

Its function is as follows. Located on the platform of the 30S subunit, it bridges several disparate RNA helices of the 16S rRNA. Forms part of the Shine-Dalgarno cleft in the 70S ribosome. In Pseudomonas fluorescens (strain ATCC BAA-477 / NRRL B-23932 / Pf-5), this protein is Small ribosomal subunit protein uS11.